A 304-amino-acid chain; its full sequence is MIHQRTLKAPVTASGVGLHSGDRIRLTLRPAPPDTGIVFRRTDLPEAADILCSPELVNDTRLSSTLVTPDGVRVGTIEHLMSALAGLGIDNLYVEMTAQETPIMDGSAAPFIYLLQTAGIVEQPAKKRFIRVLEPVGVAEGDKWVRLEPYDGFQVSLEISFDHPAFRLAPQKVDIDFARTSYIDEIARARTFGFMYEVETMARMGLGRGGSLDNAIVIDDEFVLNRDGLRFPDEFVRHKILDAIGDLYIIGHPLIAAFSGYKSGHAMNNQLLRQLLARPSAWEYVTFSHSEDVPSSFHRIPHLA.

Residues H79, H238, and D242 each contribute to the Zn(2+) site. H265 serves as the catalytic Proton donor.

It belongs to the LpxC family. Requires Zn(2+) as cofactor.

The enzyme catalyses a UDP-3-O-[(3R)-3-hydroxyacyl]-N-acetyl-alpha-D-glucosamine + H2O = a UDP-3-O-[(3R)-3-hydroxyacyl]-alpha-D-glucosamine + acetate. Its pathway is glycolipid biosynthesis; lipid IV(A) biosynthesis; lipid IV(A) from (3R)-3-hydroxytetradecanoyl-[acyl-carrier-protein] and UDP-N-acetyl-alpha-D-glucosamine: step 2/6. Functionally, catalyzes the hydrolysis of UDP-3-O-myristoyl-N-acetylglucosamine to form UDP-3-O-myristoylglucosamine and acetate, the committed step in lipid A biosynthesis. In Laribacter hongkongensis (strain HLHK9), this protein is UDP-3-O-acyl-N-acetylglucosamine deacetylase.